Reading from the N-terminus, the 72-residue chain is MDYQTDVTEDNVQIRGRARSVEGKKHNGSGLTGVKRHAVSETSQKSQQGTGNGTMTNIAEEQTITVTYNFNF.

The interval G16–I58 is disordered. The span at S40–I58 shows a compositional bias: polar residues.

This sequence belongs to the carmovirus/necrovirus/panicovirus movement protein p8 family.

In terms of biological role, cell-to-cell movement. The protein is Probable movement protein p8 of Tobacco necrosis virus (strain A) (TNV-A).